The primary structure comprises 341 residues: UDP-N-acetylenolpyruvoylglucosamine reductase (341 aa).

Residues 12-182 (LSAYAKRLDI…ISVGLLLKKN (171 aa)) enclose the FAD-binding PCMH-type domain. Arg-158 is an active-site residue. Ser-228 (proton donor) is an active-site residue. Glu-324 is a catalytic residue.

It belongs to the MurB family. It depends on FAD as a cofactor.

It localises to the cytoplasm. It carries out the reaction UDP-N-acetyl-alpha-D-muramate + NADP(+) = UDP-N-acetyl-3-O-(1-carboxyvinyl)-alpha-D-glucosamine + NADPH + H(+). It functions in the pathway cell wall biogenesis; peptidoglycan biosynthesis. Its function is as follows. Cell wall formation. This chain is UDP-N-acetylenolpyruvoylglucosamine reductase, found in Photorhabdus laumondii subsp. laumondii (strain DSM 15139 / CIP 105565 / TT01) (Photorhabdus luminescens subsp. laumondii).